The chain runs to 381 residues: Dual-specificity RNA methyltransferase RlmN (381 aa).

Glu-95 functions as the Proton acceptor in the catalytic mechanism. In terms of domain architecture, Radical SAM core spans 101 to 347; it reads EDDRGTLCVS…TTVRKTRGDD (247 aa). Residues Cys-108 and Cys-352 are joined by a disulfide bond. 3 residues coordinate [4Fe-4S] cluster: Cys-115, Cys-119, and Cys-122. S-adenosyl-L-methionine is bound by residues 178 to 179, Ser-210, 232 to 234, and Asn-309; these read GE and SLH. Residue Cys-352 is the S-methylcysteine intermediate of the active site.

This sequence belongs to the radical SAM superfamily. RlmN family. It depends on [4Fe-4S] cluster as a cofactor.

The protein localises to the cytoplasm. It carries out the reaction adenosine(2503) in 23S rRNA + 2 reduced [2Fe-2S]-[ferredoxin] + 2 S-adenosyl-L-methionine = 2-methyladenosine(2503) in 23S rRNA + 5'-deoxyadenosine + L-methionine + 2 oxidized [2Fe-2S]-[ferredoxin] + S-adenosyl-L-homocysteine. It catalyses the reaction adenosine(37) in tRNA + 2 reduced [2Fe-2S]-[ferredoxin] + 2 S-adenosyl-L-methionine = 2-methyladenosine(37) in tRNA + 5'-deoxyadenosine + L-methionine + 2 oxidized [2Fe-2S]-[ferredoxin] + S-adenosyl-L-homocysteine. In terms of biological role, specifically methylates position 2 of adenine 2503 in 23S rRNA and position 2 of adenine 37 in tRNAs. m2A2503 modification seems to play a crucial role in the proofreading step occurring at the peptidyl transferase center and thus would serve to optimize ribosomal fidelity. The sequence is that of Dual-specificity RNA methyltransferase RlmN from Bordetella petrii (strain ATCC BAA-461 / DSM 12804 / CCUG 43448).